The chain runs to 150 residues: Clitocypin (150 aa).

Belongs to the protease inhibitor I48 family. As to quaternary structure, homodimer. As to expression, uniformly expressed throughout the mature fruiting body (at mRNA and protein level).

Functionally, binds and inhibits cysteine proteinases. Inhibits most strongly papain and cathepsin L, more weakly bromelain and cathepsin B while it is completely ineffective against cathepsin H. This Clitocybe nebularis (Clouded agaric) protein is Clitocypin (Cnc1).